The following is a 209-amino-acid chain: MICOS complex subunit mic19 (209 aa).

Coiled-coil stretches lie at residues 48–86 (LELE…DTGS) and 127–156 (EVAA…GRKK).

This sequence belongs to the MICOS complex subunit Mic19 family. Component of the mitochondrial contact site and cristae organizing system (MICOS) complex.

It localises to the mitochondrion inner membrane. Functionally, component of the MICOS complex, a large protein complex of the mitochondrial inner membrane that plays crucial roles in the maintenance of crista junctions, inner membrane architecture, and formation of contact sites to the outer membrane. Involved in osmoadaptation. The polypeptide is MICOS complex subunit mic19 (Emericella nidulans (strain FGSC A4 / ATCC 38163 / CBS 112.46 / NRRL 194 / M139) (Aspergillus nidulans)).